The chain runs to 163 residues: Nucleotide-binding protein KPK_4305 (163 aa).

The protein belongs to the YajQ family.

Nucleotide-binding protein. This Klebsiella pneumoniae (strain 342) protein is Nucleotide-binding protein KPK_4305.